The chain runs to 226 residues: Phosphoglycolate phosphatase (226 aa).

Asp-9 functions as the Nucleophile in the catalytic mechanism. Positions 9 and 11 each coordinate Mg(2+). Lys-150 is a binding site for substrate. Residues Asp-173 and Asp-177 each coordinate Mg(2+).

It belongs to the archaeal SPP-like hydrolase family. It depends on Mg(2+) as a cofactor.

The catalysed reaction is 2-phosphoglycolate + H2O = glycolate + phosphate. Its function is as follows. Catalyzes the dephosphorylation of 2-phosphoglycolate. The chain is Phosphoglycolate phosphatase from Methanococcoides burtonii (strain DSM 6242 / NBRC 107633 / OCM 468 / ACE-M).